Consider the following 103-residue polypeptide: Conantokin R1-A (103 aa).

An N-terminal signal peptide occupies residues 1–21 (MQLYTYLYLLVPLVTFHLILG). A propeptide spanning residues 22–79 (TGTLDHGGALTERRSTDATALKPEPVLQKSAARSTDDNGKDRLTQMKRILKKRGNNPR) is cleaved from the precursor. A disordered region spans residues 34–83 (RRSTDATALKPEPVLQKSAARSTDDNGKDRLTQMKRILKKRGNNPRADEE). A compositionally biased stretch (basic and acidic residues) spans 55–65 (STDDNGKDRLT). Glu82, Glu83, and Glu89 each carry 4-carboxyglutamate.

Belongs to the conotoxin B superfamily. The cofactor is Ca(2+). Requires Mg(2+) as cofactor. As to expression, expressed by the venom duct.

It is found in the secreted. Its function is as follows. Conantokins inhibit N-methyl-D-aspartate (NMDA) receptors. This toxin has the highest potency for the NR2B/GRIN2B subunit (IC(50)=0.11 uM), followed by NR2D/GRIN2D (IC(50)=0.48 uM), NR2A/GRIN2A (IC(50)=2.1 uM), and NR2C/GRIN2C (IC(50)=6.1 uM) subunits when tested on rat receptors. The polypeptide is Conantokin R1-A (Conus rolani (Cone snail)).